The chain runs to 1150 residues: Alpha-mannosidase 2 (1150 aa).

The Cytoplasmic segment spans residues 1-5 (MKLSR). A helical; Signal-anchor for type II membrane protein membrane pass occupies residues 6–26 (QFTVFGSAIFCVVIFSLYLML). At 27–1150 (DRGHLDYPRG…STFRIRLRWT (1124 aa)) the chain is on the lumenal side. N-linked (GlcNAc...) asparagine glycosylation occurs at Asn-78. 2 positions are modified to phosphoserine: Ser-80 and Ser-82. The N-linked (GlcNAc...) asparagine glycan is linked to Asn-93. Positions 174, 176, 288, and 568 each coordinate Zn(2+). The active-site Nucleophile is Asp-288. A glycan (N-linked (GlcNAc...) asparagine) is linked at Asn-1129.

Belongs to the glycosyl hydrolase 38 family. As to quaternary structure, homodimer; disulfide-linked. Requires Zn(2+) as cofactor. Glycosylated. As to expression, all tissues, mostly in adrenal and thymus.

Its subcellular location is the golgi apparatus membrane. It carries out the reaction N(4)-{beta-D-GlcNAc-(1-&gt;2)-alpha-D-Man-(1-&gt;3)-[alpha-D-Man-(1-&gt;3)-[alpha-D-Man-(1-&gt;6)]-alpha-D-Man-(1-&gt;6)]-beta-D-Man-(1-&gt;4)-beta-D-GlcNAc-(1-&gt;4)-beta-D-GlcNAc}-L-asparaginyl-[protein] + 2 H2O = 2 alpha-D-mannopyranose + an N(4)-{beta-D-GlcNAc-(1-&gt;2)-alpha-D-Man-(1-&gt;3)-[alpha-D-Man-(1-&gt;6)]-beta-D-Man-(1-&gt;4)-beta-D-GlcNAc-(1-&gt;4)-beta-D-GlcNAc}-L-asparaginyl-[protein]. Its pathway is protein modification; protein glycosylation. Functionally, catalyzes the first committed step in the biosynthesis of complex N-glycans. It controls conversion of high mannose to complex N-glycans; the final hydrolytic step in the N-glycan maturation pathway. The chain is Alpha-mannosidase 2 (Man2a1) from Mus musculus (Mouse).